A 363-amino-acid polypeptide reads, in one-letter code: Copper-containing nitrite reductase (363 aa).

The N-terminal stretch at 1–24 (MSVFRSVLGACVLLGSCASSLALA) is a signal peptide. 2 Plastocyanin-like domains span residues 25-193 (GGAE…YDRV) and 194-363 (YTIG…EPKQ). Cu cation contacts are provided by His-113, His-118, His-153, Cys-154, His-163, Met-168, and His-324.

Belongs to the multicopper oxidase family. Homotrimer. Cu(2+) is required as a cofactor. Cu(+) serves as cofactor. It depends on FAD as a cofactor.

The protein localises to the periplasm. The catalysed reaction is nitric oxide + Fe(III)-[cytochrome c] + H2O = Fe(II)-[cytochrome c] + nitrite + 2 H(+). It functions in the pathway nitrogen metabolism; nitrate reduction (denitrification); dinitrogen from nitrate: step 2/4. This Pseudomonas chlororaphis (Pseudomonas aureofaciens) protein is Copper-containing nitrite reductase (nirK).